The sequence spans 383 residues: Multidrug resistance protein MexA (383 aa).

The first 23 residues, 1-23 (MQRTPAMRVLVPALLVAISALSG), serve as a signal peptide directing secretion. Cys24 carries the N-palmitoyl cysteine lipid modification. The S-diacylglycerol cysteine moiety is linked to residue Cys24. A coiled-coil region spans residues 97–151 (ATYEADYQSAQANLASTQEQAQRYKLLVADQAVSKQQYADANAAYLQSKAAVEQA).

Belongs to the membrane fusion protein (MFP) (TC 8.A.1) family. As to quaternary structure, component of the MexAB-OprM multidrug efflux complex, composed of six MexA subunits forming a hexameric tube, binding to a MexB trimer, which interact with the trimeric OprM outer membrane channel protein. OprM is thought to not directly contact MexB; instead, MexA joins MexB and OprM by forming a funnel-like hexamer anchored to the inner membrane. MexA may initially form a hexameric ring complex with MexB prior to OprM, then OprM undergoes a conformational change as it contacts MexA, allowing the periplasmic gate to open. It is thought that, under high intracellular substrate concentration, MexB ejects substrate into the tunnel formed by MexA-OprM; as the substrate level declines, conformational changes in MexB cause efflux to reduce and stop and the complex shifts to the closed state. MexB subunit acts as a substrate:proton antiporter and activity is enhanced significantly when in complex with MexA and OprM, in vitro.

It localises to the cell inner membrane. With respect to regulation, export of antibiotics and solvents is dramatically decreased in the presence of the protonophore carbonyl cyanide m-chlorophenylhydrazone (CCCP), therefore may be driven by a proton gradient. Antibiotic efflux is inhibited by pyridopyrimidine derivatives, such as ABI-PP, acting by binding to a hydrophobic pocket in MexB. Its function is as follows. The periplasmic linker component of the MexAB-OprM efflux system that confers multidrug resistance. Functions as the major efflux pump for n-hexane and p-xylene efflux. Has been shown in one study to be involved in the active efflux of the autoinducer N-(3-oxododecanoyl) homoserine lactone, thereby playing an indirect role in quorum-sensing; but has been shown in another study not to be involved in efflux of this autoinducer. Over-expression of the pump increases antibiotic and solvent efflux capacities. Implicated in the secretion of the siderophore pyoverdine. This chain is Multidrug resistance protein MexA (mexA), found in Pseudomonas aeruginosa (strain ATCC 15692 / DSM 22644 / CIP 104116 / JCM 14847 / LMG 12228 / 1C / PRS 101 / PAO1).